A 224-amino-acid polypeptide reads, in one-letter code: MNEKKAVILLSGGLDSATVAALAKTEGYACYSMSFDYGQRHRAELRAAERVARQLGMVEHKVIGLDLGGIGGSALTDPAIAVPESPCEGIPVTYVPARNTVFLALALGWAEVLGARDIFIGVNAVDYSGYPDCRPAFIEAFERMANLATKAGVEGQGFRIRAPLQNLGKDEIIRAGLRHGVDYGLTVSCYQADEEGRACGRCDSCRLRAAGFATAGVTDPTRYG.

ATP is bound at residue leucine 10–alanine 20. Zn(2+) contacts are provided by cysteine 189, cysteine 199, cysteine 202, and cysteine 205.

The protein belongs to the QueC family. Zn(2+) serves as cofactor.

It catalyses the reaction 7-carboxy-7-deazaguanine + NH4(+) + ATP = 7-cyano-7-deazaguanine + ADP + phosphate + H2O + H(+). Its pathway is purine metabolism; 7-cyano-7-deazaguanine biosynthesis. In terms of biological role, catalyzes the ATP-dependent conversion of 7-carboxy-7-deazaguanine (CDG) to 7-cyano-7-deazaguanine (preQ(0)). In Azotobacter vinelandii (strain DJ / ATCC BAA-1303), this protein is 7-cyano-7-deazaguanine synthase.